Reading from the N-terminus, the 127-residue chain is Stationary phase protein 3 (127 aa).

Transmembrane regions (helical) follow at residues 29 to 49 (LFLF…FYVI) and 63 to 83 (ANSI…CFFL). Residue asparagine 86 is glycosylated (N-linked (GlcNAc...) asparagine).

It localises to the membrane. Required for survival during stationary phase. The protein is Stationary phase protein 3 (SPG3) of Saccharomyces cerevisiae (strain ATCC 204508 / S288c) (Baker's yeast).